The chain runs to 291 residues: NAD kinase (291 aa).

Asp72 acts as the Proton acceptor in catalysis. Residues 72 to 73, 146 to 147, Arg157, Arg174, Asp176, 187 to 192, and Gln247 each bind NAD(+); these read DG, ND, and TAYSLS.

Belongs to the NAD kinase family. A divalent metal cation serves as cofactor.

The protein localises to the cytoplasm. The enzyme catalyses NAD(+) + ATP = ADP + NADP(+) + H(+). In terms of biological role, involved in the regulation of the intracellular balance of NAD and NADP, and is a key enzyme in the biosynthesis of NADP. Catalyzes specifically the phosphorylation on 2'-hydroxyl of the adenosine moiety of NAD to yield NADP. The protein is NAD kinase of Hydrogenovibrio crunogenus (strain DSM 25203 / XCL-2) (Thiomicrospira crunogena).